We begin with the raw amino-acid sequence, 714 residues long: MMQESATETISNSSMNQNGMSTLSSQLDAGSRDGRSSGDTSSEVSTVELLHLQQQQALQAARQLLLQQQTSGLKSPKSSDKQRPLQVPVSVAMMTPQVITPQQMQQILQQQVLSPQQLQALLQQQQAVMLQQQQLQEFYKKQQEQLHLQLLQQQQQQQQQQQQQQQQQQQQQQQQQQQQQQQQQQQQQQQHPGKQAKEQQQQQQQQQQLAAQQLVFQQQLLQMQQLQQQQHLLSLQRQGLISIPPGQAALPVQSLPQAGLSPAEIQQLWKEVTGVHSMEDNGIKHGGLDLTTNNSSSTTSSTTSKASPPITHHSIVNGQSSVLNARRDSSSHEETGASHTLYGHGVCKWPGCESICEDFGQFLKHLNNEHALDDRSTAQCRVQMQVVQQLEIQLSKERERLQAMMTHLHMRPSEPKPSPKPLNLVSSVTMSKNMLETSPQSLPQTPTTPTAPVTPITQGPSVITPASVPNVGAIRRRHSDKYNIPMSSEIAPNYEFYKNADVRPPFTYATLIRQAIMESSDRQLTLNEIYSWFTRTFAYFRRNAATWKNAVRHNLSLHKCFVRVENVKGAVWTVDEVEYQKRRSQKITGSPTLVKNIPTSLGYGAALNASLQAALAESSLPLLSNPGLINNASSGLLQAVHEDLNGSLDHIDSNGNSSPGCSPQPHIHSIHVKEEPVIAEDEDCPMSLVTTANHSPELEDDREIEEEPLSEDLE.

Residues 1 to 28 show a composition bias toward polar residues; it reads MMQESATETISNSSMNQNGMSTLSSQLD. 2 disordered regions span residues 1-45 and 284-338; these read MMQE…SEVS and KHGG…TGAS. Low complexity predominate over residues 291 to 304; that stretch reads TTNNSSSTTSSTTS. Residues 314 to 323 are compositionally biased toward polar residues; it reads SIVNGQSSVL. Positions 325-336 are enriched in basic and acidic residues; that stretch reads ARRDSSSHEETG. The segment at 345-370 adopts a C2H2-type zinc-finger fold; that stretch reads GVCKWPGCESICEDFGQFLKHLNNEH. Positions 387 to 408 are leucine-zipper; it reads VQQLEIQLSKERERLQAMMTHL. The interval 421–425 is CTBP1-binding; sequence PLNLV. Positions 437–458 are enriched in low complexity; sequence TSPQSLPQTPTTPTAPVTPITQ. The interval 437 to 464 is disordered; it reads TSPQSLPQTPTTPTAPVTPITQGPSVIT. Positions 503–593 form a DNA-binding region, fork-head; it reads RPPFTYATLI…SQKITGSPTL (91 aa). Disordered regions lie at residues 648–667 and 677–714; these read LDHI…QPHI and VIAE…EDLE. The span at 698 to 714 shows a compositional bias: acidic residues; it reads LEDDREIEEEPLSEDLE.

Forms homodimers and heterodimers with FOXP1 and FOXP4. Dimerization is required for DNA-binding. Interacts with CTBP1. Interacts with FOXP1. Interacts with TBR1. Interacts with ZMYM2.

Its subcellular location is the nucleus. In terms of biological role, transcriptional repressor that may play a role in the specification and differentiation of lung epithelium. May also play a role in developing neural, gastrointestinal and cardiovascular tissues. Can act with CTBP1 to synergistically repress transcription but CTPBP1 is not essential. Plays a role in synapse formation by regulating SRPX2 levels. The protein is Forkhead box protein P2 (FOXP2) of Macaca mulatta (Rhesus macaque).